Here is an 800-residue protein sequence, read N- to C-terminus: Endoglucanase (800 aa).

Positions 1 to 30 are cleaved as a signal peptide; it reads MMLRKKTKQLISSILILVLLLSLFPTALAA. The Proton donor role is filled by E190. E305 acts as the Nucleophile in catalysis. The tract at residues 761–800 is disordered; that stretch reads AATTEPVEPEPVDPGEETPPVDEKEAKTEQKEAEKEEKEE. Residues 767 to 780 are compositionally biased toward acidic residues; sequence VEPEPVDPGEETPP. Residues 781 to 800 are compositionally biased toward basic and acidic residues; sequence VDEKEAKTEQKEAEKEEKEE.

This sequence belongs to the glycosyl hydrolase 5 (cellulase A) family.

The enzyme catalyses Endohydrolysis of (1-&gt;4)-beta-D-glucosidic linkages in cellulose, lichenin and cereal beta-D-glucans.. The protein is Endoglucanase of Halalkalibacter akibai (strain ATCC 43226 / DSM 21942 / CIP 109018 / JCM 9157 / 1139) (Bacillus akibai).